The following is a 198-amino-acid chain: Probable molybdenum cofactor guanylyltransferase (198 aa).

GTP-binding positions include 11-13 (LAG), lysine 23, aspartate 71, and aspartate 102. A Mg(2+)-binding site is contributed by aspartate 102.

Belongs to the MobA family. Requires Mg(2+) as cofactor.

It localises to the cytoplasm. It catalyses the reaction Mo-molybdopterin + GTP + H(+) = Mo-molybdopterin guanine dinucleotide + diphosphate. Transfers a GMP moiety from GTP to Mo-molybdopterin (Mo-MPT) cofactor (Moco or molybdenum cofactor) to form Mo-molybdopterin guanine dinucleotide (Mo-MGD) cofactor. The polypeptide is Probable molybdenum cofactor guanylyltransferase (Halalkalibacterium halodurans (strain ATCC BAA-125 / DSM 18197 / FERM 7344 / JCM 9153 / C-125) (Bacillus halodurans)).